Reading from the N-terminus, the 525-residue chain is Glutamate--cysteine ligase (525 aa).

The protein belongs to the glutamate--cysteine ligase type 1 family. Type 1 subfamily.

It carries out the reaction L-cysteine + L-glutamate + ATP = gamma-L-glutamyl-L-cysteine + ADP + phosphate + H(+). It participates in sulfur metabolism; glutathione biosynthesis; glutathione from L-cysteine and L-glutamate: step 1/2. This chain is Glutamate--cysteine ligase, found in Pseudomonas putida (strain ATCC 47054 / DSM 6125 / CFBP 8728 / NCIMB 11950 / KT2440).